The chain runs to 528 residues: Probable rhamnogalacturonate lyase A (528 aa).

A signal peptide spans 1 to 20 (MLSKATLLLFLPSWARVTYA). N46 carries an N-linked (GlcNAc...) asparagine glycan. Residues C50 and C93 are joined by a disulfide bond. A glycan (N-linked (GlcNAc...) asparagine) is linked at N148. A disulfide bond links C184 and C193. A glycan (N-linked (GlcNAc...) asparagine) is linked at N351.

It belongs to the polysaccharide lyase 4 family.

It localises to the secreted. The catalysed reaction is Endotype eliminative cleavage of L-alpha-rhamnopyranosyl-(1-&gt;4)-alpha-D-galactopyranosyluronic acid bonds of rhamnogalacturonan I domains in ramified hairy regions of pectin leaving L-rhamnopyranose at the reducing end and 4-deoxy-4,5-unsaturated D-galactopyranosyluronic acid at the non-reducing end.. Functionally, pectinolytic enzymes consist of four classes of enzymes: pectin lyase, polygalacturonase, pectin methylesterase and rhamnogalacturonase. Degrades the rhamnogalacturonan I (RG-I) backbone of pectin. This Aspergillus fumigatus (strain CBS 144.89 / FGSC A1163 / CEA10) (Neosartorya fumigata) protein is Probable rhamnogalacturonate lyase A (rglA).